The following is a 360-amino-acid chain: Mannose-1-phosphate guanylyltransferase catalytic subunit beta (360 aa).

Positions 2-222 (KALILVGGYG…QGFWMDIGQP (221 aa)) are substrate-binding domain. Asp-110 provides a ligand contact to GDP-alpha-D-mannose. Residue Asp-110 participates in Mg(2+) binding. Residue Lys-162 is part of the active site. Asp-218 lines the GDP-alpha-D-mannose pocket. Asp-218 is a binding site for Mg(2+). Residues 245–360 (RAGPGFLGNV…DSVPEPRIIM (116 aa)) are hexapeptide repeat domain.

It belongs to the transferase hexapeptide repeat family. Component of the GMPPA-GMPPB mannose-1-phosphate guanylyltransferase complex composed of 4 gmppa subunits and 8 gmppb subunits; the complex is organized into three layers, a central layer made up of 2 gmppa dimers sandwiched between two layers each made up of 2 gmppb dimers. Catalytic activity of gmppb is reduced when part of the complex and binding of GDP-alpha-D-Mannose by gmppa induces allosteric feedback inhibition of gmppb. Requires Mg(2+) as cofactor.

The catalysed reaction is alpha-D-mannose 1-phosphate + GTP + H(+) = GDP-alpha-D-mannose + diphosphate. It participates in nucleotide-sugar biosynthesis; GDP-alpha-D-mannose biosynthesis; GDP-alpha-D-mannose from alpha-D-mannose 1-phosphate (GTP route): step 1/1. Enzyme activity is reduced by incorporation into the GMPPA-GMPPB mannose-1-phosphate guanylyltransferase complex. Allosterically inhibited, when part of the GMPPA-GMPPB complex, by GDP-alpha-D-mannose binding to GMPPA. Catalytic subunit of the GMPPA-GMPPB mannose-1-phosphate guanylyltransferase complex. Catalyzes the formation of GDP-mannose, an essential precursor of glycan moieties of glycoproteins and glycolipids. Can catalyze the reverse reaction in vitro. Together with GMPPA regulates GDP-alpha-D-mannose levels. The polypeptide is Mannose-1-phosphate guanylyltransferase catalytic subunit beta (gmppb) (Danio rerio (Zebrafish)).